The following is a 591-amino-acid chain: Aspartate--tRNA(Asp/Asn) ligase (591 aa).

Glutamate 174 contacts L-aspartate. An aspartate region spans residues 198–201; it reads QLFK. Position 220 (arginine 220) interacts with L-aspartate. ATP is bound by residues 220 to 222 and glutamine 229; that span reads RDE. Histidine 450 provides a ligand contact to L-aspartate. Residue glutamate 483 coordinates ATP. Arginine 490 is a binding site for L-aspartate. 535-538 is an ATP binding site; the sequence is GLDR.

The protein belongs to the class-II aminoacyl-tRNA synthetase family. Type 1 subfamily. As to quaternary structure, homodimer.

The protein localises to the cytoplasm. The enzyme catalyses tRNA(Asx) + L-aspartate + ATP = L-aspartyl-tRNA(Asx) + AMP + diphosphate. Functionally, aspartyl-tRNA synthetase with relaxed tRNA specificity since it is able to aspartylate not only its cognate tRNA(Asp) but also tRNA(Asn). Reaction proceeds in two steps: L-aspartate is first activated by ATP to form Asp-AMP and then transferred to the acceptor end of tRNA(Asp/Asn). In Pseudomonas putida (strain W619), this protein is Aspartate--tRNA(Asp/Asn) ligase.